Consider the following 312-residue polypeptide: Prephenate dehydratase (312 aa).

The Prephenate dehydratase domain occupies 3 to 194 (GIAYLGPEGT…ARTRFVLVGR (192 aa)). One can recognise an ACT domain in the interval 208–285 (SVVLQLDNVP…ADVRYLGSWP (78 aa)). Residues 291-312 (GAAPPPMDESASWLEGLREGRP) are disordered.

As to quaternary structure, homodimer.

The enzyme catalyses prephenate + H(+) = 3-phenylpyruvate + CO2 + H2O. It participates in amino-acid biosynthesis; L-phenylalanine biosynthesis; phenylpyruvate from prephenate: step 1/1. The chain is Prephenate dehydratase (pheA) from Mycolicibacterium vanbaalenii (strain DSM 7251 / JCM 13017 / BCRC 16820 / KCTC 9966 / NRRL B-24157 / PYR-1) (Mycobacterium vanbaalenii).